Reading from the N-terminus, the 838-residue chain is Probable beta-glucosidase I (838 aa).

Residues N57 and N197 are each glycosylated (N-linked (GlcNAc...) asparagine). D225 is a catalytic residue. Positions 395 to 555 (EGEKGFKFRV…GQEELISKAA (161 aa)) constitute a PA14 domain. An N-linked (GlcNAc...) asparagine glycan is attached at N493.

The protein belongs to the glycosyl hydrolase 3 family.

Its subcellular location is the secreted. It carries out the reaction Hydrolysis of terminal, non-reducing beta-D-glucosyl residues with release of beta-D-glucose.. It functions in the pathway glycan metabolism; cellulose degradation. Beta-glucosidases are one of a number of cellulolytic enzymes involved in the degradation of cellulosic biomass. Catalyzes the last step releasing glucose from the inhibitory cellobiose. The sequence is that of Probable beta-glucosidase I (bglI) from Aspergillus clavatus (strain ATCC 1007 / CBS 513.65 / DSM 816 / NCTC 3887 / NRRL 1 / QM 1276 / 107).